The primary structure comprises 144 residues: Putative pre-16S rRNA nuclease (144 aa).

This sequence belongs to the YqgF nuclease family.

The protein resides in the cytoplasm. Could be a nuclease involved in processing of the 5'-end of pre-16S rRNA. The polypeptide is Putative pre-16S rRNA nuclease (Chlorobium phaeobacteroides (strain BS1)).